Consider the following 595-residue polypeptide: DNA mismatch repair protein MutL (595 aa).

The protein belongs to the DNA mismatch repair MutL/HexB family.

Its function is as follows. This protein is involved in the repair of mismatches in DNA. It is required for dam-dependent methyl-directed DNA mismatch repair. May act as a 'molecular matchmaker', a protein that promotes the formation of a stable complex between two or more DNA-binding proteins in an ATP-dependent manner without itself being part of a final effector complex. The protein is DNA mismatch repair protein MutL of Rhodopseudomonas palustris (strain ATCC BAA-98 / CGA009).